The following is a 253-amino-acid chain: MEKLLIVNADDFGLCKGQNYGIIEAFRHGIVSSTTAMMNCAEIYHAAELSKQNPALPVGMHFVLTYGRPLTAMQSLVDAKGELGKWLWARAEAGELNLDEIAQELTAQFNKFVAVFGRPPTHVDSHHHVHMLPQIYPLIESFAHEKSLPLRIDRHEAQQQGMVLNSPRSTEWFDAGFYGENLTEQSFLQLLAKADQNGINTIEVMCHPAFIDKILMTSGYCYPRLTELEILTSPALKQSIEQLGYRLGSYSDC.

Mg(2+) contacts are provided by His61 and His126.

This sequence belongs to the YdjC deacetylase family. ChbG subfamily. In terms of assembly, homodimer. Mg(2+) is required as a cofactor.

The protein resides in the cytoplasm. It catalyses the reaction N,N'-diacetylchitobiose + H2O = N-acetyl-beta-D-glucosaminyl-(1-&gt;4)-D-glucosamine + acetate. The catalysed reaction is diacetylchitobiose-6'-phosphate + H2O = N'-monoacetylchitobiose-6'-phosphate + acetate. It participates in glycan degradation; chitin degradation. In terms of biological role, involved in the degradation of chitin. ChbG is essential for growth on the acetylated chitooligosaccharides chitobiose and chitotriose but is dispensable for growth on cellobiose and chitosan dimer, the deacetylated form of chitobiose. Deacetylation of chitobiose-6-P and chitotriose-6-P is necessary for both the activation of the chb promoter by the regulatory protein ChbR and the hydrolysis of phosphorylated beta-glucosides by the phospho-beta-glucosidase ChbF. Catalyzes the removal of only one acetyl group from chitobiose-6-P to yield monoacetylchitobiose-6-P, the inducer of ChbR and the substrate of ChbF. The polypeptide is Chitooligosaccharide deacetylase (Yersinia enterocolitica serotype O:8 / biotype 1B (strain NCTC 13174 / 8081)).